A 149-amino-acid polypeptide reads, in one-letter code: D-aminoacyl-tRNA deacylase (149 aa).

The Gly-cisPro motif, important for rejection of L-amino acids signature appears at 137–138 (GP).

The protein belongs to the DTD family. In terms of assembly, homodimer.

It is found in the cytoplasm. It carries out the reaction glycyl-tRNA(Ala) + H2O = tRNA(Ala) + glycine + H(+). The enzyme catalyses a D-aminoacyl-tRNA + H2O = a tRNA + a D-alpha-amino acid + H(+). In terms of biological role, an aminoacyl-tRNA editing enzyme that deacylates mischarged D-aminoacyl-tRNAs. Also deacylates mischarged glycyl-tRNA(Ala), protecting cells against glycine mischarging by AlaRS. Acts via tRNA-based rather than protein-based catalysis; rejects L-amino acids rather than detecting D-amino acids in the active site. By recycling D-aminoacyl-tRNA to D-amino acids and free tRNA molecules, this enzyme counteracts the toxicity associated with the formation of D-aminoacyl-tRNA entities in vivo and helps enforce protein L-homochirality. The polypeptide is D-aminoacyl-tRNA deacylase (Anaeromyxobacter dehalogenans (strain 2CP-C)).